A 702-amino-acid polypeptide reads, in one-letter code: Elongation factor G (702 aa).

The region spanning Glu-8–Val-290 is the tr-type G domain. Residues Ala-17–Thr-24, Asp-88–His-92, and Asn-142–Asp-145 contribute to the GTP site.

It belongs to the TRAFAC class translation factor GTPase superfamily. Classic translation factor GTPase family. EF-G/EF-2 subfamily.

It localises to the cytoplasm. Functionally, catalyzes the GTP-dependent ribosomal translocation step during translation elongation. During this step, the ribosome changes from the pre-translocational (PRE) to the post-translocational (POST) state as the newly formed A-site-bound peptidyl-tRNA and P-site-bound deacylated tRNA move to the P and E sites, respectively. Catalyzes the coordinated movement of the two tRNA molecules, the mRNA and conformational changes in the ribosome. The sequence is that of Elongation factor G from Acidovorax sp. (strain JS42).